Here is a 296-residue protein sequence, read N- to C-terminus: Phosphoribosylaminoimidazole-succinocarboxamide synthase (296 aa).

This sequence belongs to the SAICAR synthetase family.

The enzyme catalyses 5-amino-1-(5-phospho-D-ribosyl)imidazole-4-carboxylate + L-aspartate + ATP = (2S)-2-[5-amino-1-(5-phospho-beta-D-ribosyl)imidazole-4-carboxamido]succinate + ADP + phosphate + 2 H(+). It participates in purine metabolism; IMP biosynthesis via de novo pathway; 5-amino-1-(5-phospho-D-ribosyl)imidazole-4-carboxamide from 5-amino-1-(5-phospho-D-ribosyl)imidazole-4-carboxylate: step 1/2. This is Phosphoribosylaminoimidazole-succinocarboxamide synthase from Pelobacter propionicus (strain DSM 2379 / NBRC 103807 / OttBd1).